Consider the following 394-residue polypeptide: 8-amino-7-oxononanoate synthase (394 aa).

R21 serves as a coordination point for substrate. Pyridoxal 5'-phosphate is bound at residue 112–113 (GY). Substrate is bound at residue H137. Residues S183, H211, and T239 each coordinate pyridoxal 5'-phosphate. N6-(pyridoxal phosphate)lysine is present on K242. Substrate is bound at residue T358.

It belongs to the class-II pyridoxal-phosphate-dependent aminotransferase family. BioF subfamily. In terms of assembly, homodimer. Requires pyridoxal 5'-phosphate as cofactor.

It catalyses the reaction 6-carboxyhexanoyl-[ACP] + L-alanine + H(+) = (8S)-8-amino-7-oxononanoate + holo-[ACP] + CO2. The protein operates within cofactor biosynthesis; biotin biosynthesis. Its function is as follows. Catalyzes the decarboxylative condensation of pimeloyl-[acyl-carrier protein] and L-alanine to produce 8-amino-7-oxononanoate (AON), [acyl-carrier protein], and carbon dioxide. This is 8-amino-7-oxononanoate synthase from Burkholderia thailandensis (strain ATCC 700388 / DSM 13276 / CCUG 48851 / CIP 106301 / E264).